A 63-amino-acid polypeptide reads, in one-letter code: Large ribosomal subunit protein bL32 (63 aa).

Residues 1-27 (MANPKAKMSKSRRDKRRAQFNARTKPA) form a disordered region. The span at 7-18 (KMSKSRRDKRRA) shows a compositional bias: basic residues.

Belongs to the bacterial ribosomal protein bL32 family.

This chain is Large ribosomal subunit protein bL32, found in Pelodictyon phaeoclathratiforme (strain DSM 5477 / BU-1).